A 468-amino-acid chain; its full sequence is Chromatin assembly factor 1 subunit B (468 aa).

WD repeat units lie at residues 11–52 (HDSQ…NGQN), 69–108 (HHEQ…TQQE), 143–182 (TAAA…LVCG), 185–224 (DHGH…AGVV), and 371–413 (IHYS…SRIE).

This sequence belongs to the WD repeat HIR1 family. As to quaternary structure, component of chromatin assembly factor 1 (CAF-1), composed of MSI1/p50, CAC2/p60 and CAC1/p90. Interacts with RTT106.

The protein resides in the nucleus. Functionally, acts as a component of the histone chaperone complex chromatin assembly factor 1 (CAF-1), which assembles histone octamers onto replicating DNA. It performs the first step of the nucleosome assembly process, bringing newly synthesized histones H3 and H4 to replicating DNA; histones H2A/H2B can bind to this chromatin precursor subsequent to DNA replication to complete the histone octamer. Plays a role in the maintenance of heterochromatin. The sequence is that of Chromatin assembly factor 1 subunit B (CAC2) from Saccharomyces cerevisiae (strain ATCC 204508 / S288c) (Baker's yeast).